Here is a 297-residue protein sequence, read N- to C-terminus: Transcription factor MYB1R1 (297 aa).

The tract at residues aspartate 44–proline 96 is disordered. The segment covering asparagine 52 to asparagine 63 has biased composition (low complexity). An HTH myb-type domain is found at arginine 89–serine 145. The H-T-H motif DNA-binding region spans tryptophan 117 to phenylalanine 141.

Its subcellular location is the nucleus. The protein resides in the cytoplasm. The protein localises to the cytosol. In terms of biological role, binds selectively to the DNA sequence 5'-[GA]GATAA-3' and may act as a transcription factor involved in the regulation of drought-responsive genes. Enhances stomatal closure in response to abscisic acid (ABA). Confers drought and salt tolerance. The chain is Transcription factor MYB1R1 from Solanum tuberosum (Potato).